Here is a 115-residue protein sequence, read N- to C-terminus: Peptidyl-tRNA hydrolase (115 aa).

This sequence belongs to the PTH2 family.

It localises to the cytoplasm. The catalysed reaction is an N-acyl-L-alpha-aminoacyl-tRNA + H2O = an N-acyl-L-amino acid + a tRNA + H(+). The natural substrate for this enzyme may be peptidyl-tRNAs which drop off the ribosome during protein synthesis. This chain is Peptidyl-tRNA hydrolase, found in Archaeoglobus fulgidus (strain ATCC 49558 / DSM 4304 / JCM 9628 / NBRC 100126 / VC-16).